A 120-amino-acid chain; its full sequence is UPF0102 protein Daro_0503 (120 aa).

A disordered region spans residues 1–20; the sequence is MQVKANDTTTARGREAEDRA.

Belongs to the UPF0102 family.

The polypeptide is UPF0102 protein Daro_0503 (Dechloromonas aromatica (strain RCB)).